Reading from the N-terminus, the 333-residue chain is Syntaxin-4 (333 aa).

The Cytoplasmic portion of the chain corresponds to 1-312; the sequence is MGKDRLPELL…QHQKKARKKK (312 aa). The segment covering 50–66 has biased composition (low complexity); the sequence is YSVVSQNSHSCSNNNSS. Positions 50 to 81 are disordered; sequence YSVVSQNSHSCSNNNSSTEPKDRSSSKMTQYG. A coiled-coil region spans residues 91-116; the sequence is YTEIRQQLAQIAANLETMNRMAQTVN. A t-SNARE coiled-coil homology domain is found at 239–301; sequence LREMMDRFNE…DKGADELDQA (63 aa). The chain crosses the membrane as a helical; Anchor for type IV membrane protein span at residues 313–333; that stretch reads IMLIVILAAVLLVLLLVGIYL.

Belongs to the syntaxin family.

The protein localises to the membrane. Potentially involved in docking of synaptic vesicles at presynaptic active zones. This Drosophila melanogaster (Fruit fly) protein is Syntaxin-4.